Consider the following 238-residue polypeptide: Probable transcriptional regulatory protein CHU_3516 (238 aa).

It belongs to the TACO1 family.

The protein resides in the cytoplasm. In Cytophaga hutchinsonii (strain ATCC 33406 / DSM 1761 / CIP 103989 / NBRC 15051 / NCIMB 9469 / D465), this protein is Probable transcriptional regulatory protein CHU_3516.